Here is a 283-residue protein sequence, read N- to C-terminus: Polyamine aminopropyltransferase (283 aa).

One can recognise a PABS domain in the interval glutamate 2–lysine 237. Glutamine 31 contacts S-methyl-5'-thioadenosine. Histidine 62 and aspartate 86 together coordinate spermidine. S-methyl-5'-thioadenosine is bound by residues glutamate 106 and aspartate 137–glycine 138. Aspartate 155 functions as the Proton acceptor in the catalytic mechanism. A spermidine-binding site is contributed by aspartate 155 to aspartate 158. Position 162 (proline 162) interacts with S-methyl-5'-thioadenosine.

Belongs to the spermidine/spermine synthase family. As to quaternary structure, homodimer or homotetramer.

The protein localises to the cytoplasm. It catalyses the reaction S-adenosyl 3-(methylsulfanyl)propylamine + putrescine = S-methyl-5'-thioadenosine + spermidine + H(+). The protein operates within amine and polyamine biosynthesis; spermidine biosynthesis; spermidine from putrescine: step 1/1. Catalyzes the irreversible transfer of a propylamine group from the amino donor S-adenosylmethioninamine (decarboxy-AdoMet) to putrescine (1,4-diaminobutane) to yield spermidine. This chain is Polyamine aminopropyltransferase, found in Clostridium perfringens (strain 13 / Type A).